A 174-amino-acid polypeptide reads, in one-letter code: Glutaredoxin-C5, chloroplastic (174 aa).

Residues 1–51 (MAVTAFNTLKLVSSSLDPIPSVSCSSYSFSLIYVGSPYKRCLKQSCSVRAM) constitute a chloroplast transit peptide. Threonine 52 carries the post-translational modification N-acetylthreonine. Cysteine 90 is subject to S-glutathionyl cysteine; partial. Cysteine 90 and cysteine 93 form a disulfide bridge. In terms of domain architecture, Glutaredoxin spans 93 to 171 (CTEVKTLFKR…LMLAEANGKN (79 aa)). The glutathione site is built by valine 135, cysteine 148, and threonine 149. S-glutathionyl cysteine; partial is present on cysteine 148.

Belongs to the glutaredoxin family. CPYC subfamily. In terms of assembly, monomeric apoprotein and homodimeric holoprotein containing a [2Fe-2S] cluster. No in vitro interactions with SUFE1, BOLA1, BOLA2 or BOLA4. Glutathionylated.

It localises to the plastid. Its subcellular location is the chloroplast. Functionally, has a glutathione-disulfide oxidoreductase activity in the presence of NADPH and glutathione reductase. Reduces low molecular weight disulfides and proteins. Can assemble a [2Fe-2S] cluster, but cannot transfer it to an apoferredoxin. This chain is Glutaredoxin-C5, chloroplastic, found in Arabidopsis thaliana (Mouse-ear cress).